The chain runs to 328 residues: 2-oxoglutarate-dependent dioxygenase gloE (328 aa).

A Fe2OG dioxygenase domain is found at 170–271 (TRTNLTFLKY…RYTLAYFLRP (102 aa)). 3 residues coordinate Fe cation: His-194, Asp-196, and His-249. Residue Arg-262 participates in 2-oxoglutarate binding.

Belongs to the iron/ascorbate-dependent oxidoreductase family. Fe(2+) is required as a cofactor.

It functions in the pathway mycotoxin biosynthesis. Its function is as follows. 2-oxoglutarate-dependent dioxygenase; part of the gene cluster that mediates the biosynthesis of pneumocandins, lipohexapeptides of the echinocandin family that prevent fungal cell wall formation by non-competitive inhibition of beta-1,3-glucan synthase. The 10,12-dimethylmyristoyl side chain is synthesized by the reducing polyketide synthase gloL/GLPKS4. The thioesterase gloN/GLHYD exclusively interacts with gloL/GLPKS4 to maintain turnover of the polyketide side chain. The 10R,12S-dimethylmyristic acid is then transferred to the first thiolation domain of the nonribosomal peptide synthetase gloA/GLNRPS4 by the acyl-AMP ligase gloD/GLligase, followed by its acylation to L-ornithine to trigger elongation of the cyclic hexapeptide. L-ornithine, 4R-hydroxyl-L-proline (generated from L-proline by the dioxygenase gloF/GLOXY2), 3S-hydroxyl-L-homotyrosine (generated by gloG/GLHtyB, gloH/GLHtyA, gloI/GLHtyC, gloJ/GLHtyD and hydroxylated at C-3 by the dioxygenase gloM/GLOXY1), 3R-hydroxyl-L-glutamine (generated from L-glutamine probably by the dioxygenase gloE/GLOXY3) and 3S-hydroxyl-L-proline (generated from L-proline by the dioxygenase gloF/GLOXY2 to yield pneumocandin B0), or 3S-hydroxyl-4S-methyl-L-proline (generated from L-leucine by the dioxygenase gloC/GLOXY4 to yield pneumocandin A0) are sequentially added to the growing chain. The last C domain of gloA/GLNRPS4 is proposed to be responsible for cyclization by condensation to form the peptide bond between L-ornithine and 3S-hydroxyl-4S-methyl-L-proline (for pneumocandin A0) or 3S-hydroxyl-L-proline (for pneumocandin B0). Finally, the subsequent C-4 hydroxylation of 3S-hydroxyl-L-homotyrosine and L-ornithine dihydroxylation at C-4 and C-5 are performed by the cytochrome P450 monooxygenases gloP/GLP450-1 and gloO/GLP450-2, respectively. The sequence is that of 2-oxoglutarate-dependent dioxygenase gloE from Glarea lozoyensis (strain ATCC 20868 / MF5171).